Reading from the N-terminus, the 631-residue chain is Nucleoside triphosphatase I (631 aa).

The region spanning 42–204 (FLGLDSMHSL…TMLVNLLRPG (163 aa)) is the Helicase ATP-binding domain. 55-62 (HETGVGKT) contacts ATP. Positions 141 to 144 (DECH) match the DEXH box motif. One can recognise a Helicase C-terminal domain in the interval 367 to 532 (KFIDVCLGIL…EFVQLFRVFK (166 aa)). The segment at 457-524 (DIFILDMTWN…EIIQSKSKEF (68 aa)) is binding to the cap-specific mRNA (nucleoside-2'-O-)-methyltransferase.

It belongs to the helicase family. NPH I subfamily. Monomer. Interacts (via C-terminus) with RAP94/OPG109 (via N-terminus). Interacts with the cap-specific mRNA (nucleoside-2'-O-)-methyltransferase OPG102.

It is found in the virion. The enzyme catalyses a ribonucleoside 5'-triphosphate + H2O = a ribonucleoside 5'-diphosphate + phosphate + H(+). DNA-dependent ATPase that acts as a 5' to 3' translocase on single-stranded DNA and thereby plays a role in transcription termination of viral early genes. Uses forward translocation in concert with the viral RNA polymerase RAP94/OPG109 subunit and the capping enzyme/VTF to catalyze release of UUUUUNU-containing nascent RNA from the elongation complex. In addition, acts as a positive elongation factor to assist transcription through problematic sequences. This chain is Nucleoside triphosphatase I (OPG123), found in Bos taurus (Bovine).